Consider the following 624-residue polypeptide: Laccase-1 (624 aa).

The N-terminal stretch at 1 to 20 is a signal peptide; sequence MRGVVKLFFLSCSLVSLVSS. 2 consecutive Plastocyanin-like domains span residues 69 to 183 and 195 to 355; these read TKAL…HSPN and DRIV…VVRY. His-117, His-119, His-162, and His-164 together coordinate Cu cation. Residues Cys-138 and Cys-578 are joined by a disulfide bond. Residues Asn-242, Asn-320, and Asn-430 are each glycosylated (N-linked (GlcNAc...) asparagine). The Plastocyanin-like 3 domain occupies 469-562; sequence IIINNLDGVI…GKLAVVVIQP (94 aa). 3 residues coordinate Cu cation: His-480, His-483, and His-485. An N-linked (GlcNAc...) asparagine glycan is attached at Asn-503. Residues His-543, Cys-544, His-545, and His-549 each coordinate Cu cation. A disordered region spans residues 582–603; sequence DPNAFGPARRSPSPSIQSSKTS. A compositionally biased stretch (low complexity) spans 592 to 603; the sequence is SPSPSIQSSKTS.

This sequence belongs to the multicopper oxidase family. Requires Cu cation as cofactor.

The protein localises to the secreted. Its subcellular location is the cell wall. It catalyses the reaction 4 hydroquinone + O2 = 4 benzosemiquinone + 2 H2O. Functionally, laccase that catalyzes the oxidation of certain aromatic compounds, including L-dopa, to quinones, which then polymerize to melanin. Able to oxidize a wide variety of aromatic diphenol and diamino groups in the ortho, meta, and para positions but not monophenolic groups such as in phenol, tyramine, or tyrosine. Plays an important role in virulence. Plays a role in dissemination to extrapulmonary sites but is not involved in pulmonary growth or in elicitation of cellular immune responses in the lung. The polypeptide is Laccase-1 (LAC1) (Cryptococcus neoformans var. grubii serotype A (strain H99 / ATCC 208821 / CBS 10515 / FGSC 9487) (Filobasidiella neoformans var. grubii)).